The chain runs to 507 residues: ATP synthase subunit alpha (507 aa).

An ATP-binding site is contributed by Gly-168–Thr-175.

It belongs to the ATPase alpha/beta chains family. F-type ATPases have 2 components, CF(1) - the catalytic core - and CF(0) - the membrane proton channel. CF(1) has five subunits: alpha(3), beta(3), gamma(1), delta(1), epsilon(1). CF(0) has three main subunits: a(1), b(2) and c(9-12). The alpha and beta chains form an alternating ring which encloses part of the gamma chain. CF(1) is attached to CF(0) by a central stalk formed by the gamma and epsilon chains, while a peripheral stalk is formed by the delta and b chains.

It localises to the cell membrane. It carries out the reaction ATP + H2O + 4 H(+)(in) = ADP + phosphate + 5 H(+)(out). Produces ATP from ADP in the presence of a proton gradient across the membrane. The alpha chain is a regulatory subunit. The sequence is that of ATP synthase subunit alpha from Mesomycoplasma hyopneumoniae (strain 232) (Mycoplasma hyopneumoniae).